A 541-amino-acid chain; its full sequence is Protein wntless homolog B (541 aa).

The Cytoplasmic portion of the chain corresponds to 1–15; sequence MAGAIIENMSTKKLC. The chain crosses the membrane as a helical span at residues 16-36; the sequence is MVGVALLLLQVLAFLVGGLIA. Residues 37–232 lie on the Lumenal side of the membrane; the sequence is PKPTTYVNPV…SIFQNGGFTM (196 aa). Residues 233–253 form a helical membrane-spanning segment; the sequence is VWFAMKTFLTPCIIIIMIWYW. The Cytoplasmic portion of the chain corresponds to 254–268; that stretch reads RRITMMTRSPVLLEK. A helical transmembrane segment spans residues 269 to 289; sequence VIFALGISMTFINIPVEWFSI. The Lumenal segment spans residues 290-303; sequence GYDWTWMLLFGDIR. The helical transmembrane segment at 304–324 threads the bilayer; that stretch reads QGIFYAMLLSFWIIFCGEHMM. Over 325–331 the chain is Cytoplasmic; it reads DQAERNR. A helical membrane pass occupies residues 332–352; it reads ISIYWKQVGPIAFGSCCLFIF. Topologically, residues 353–379 are lumenal; sequence DMCERGVQLKNPFYSIWTTDVGAEIAM. Residues 380 to 400 traverse the membrane as a helical segment; that stretch reads AFIIVAGICACLYFLFLCFMV. Residues 401 to 431 lie on the Cytoplasmic side of the membrane; that stretch reads YQVFRNISGKRSNLPAMSKARRLHYEGLIFR. The helical transmembrane segment at 432–452 threads the bilayer; sequence FKFLMIITLACAALTVVFFIT. At 453–471 the chain is on the lumenal side; it reads TQITEGNWKLGDLSIELNS. The chain crosses the membrane as a helical span at residues 472–492; sequence AFFTGIYGMWNLYVFALMFLY. Topologically, residues 493-541 are cytoplasmic; it reads APSHKHYGDGQSNDGAGMSSGEELQLTTTITHIDGPTELYRLAGKEAQE.

It belongs to the wntless family. Enriched in the animal hemisphere of the early cleavage embryo, where expression persists until the late gastrula stage. At the neurula stage, strongly expressed at the border of the neural plate and dorsal midline. After the neurula stage, expressed in various organs, including the eye, liver, heart, pronephros, otic vesicle, and dorsal neural tube. Expression in the developing eye is dynamic; expressed in the eye field from stages 23 to 27, and from stage 30 expression is confined to distinct regions including the central part and border of the eye.

The protein resides in the golgi apparatus membrane. It is found in the cytoplasmic vesicle membrane. Its function is as follows. Required for a subset of Wnt-dependent developmental processes, in particular, eye and pronephros development. Regulates the secretion of wnt4, which is required for eye development. The polypeptide is Protein wntless homolog B (wls-b) (Xenopus laevis (African clawed frog)).